The chain runs to 259 residues: MVSPDTIRTAIGVVGNGTALVLFLSPVPTFIRIWKKGSVEQYSAVPYVATLLNCMMWVLYGLPAVHPHSMLVITINGTGMAIELTYIALFLAFSLGAVRRRVLLLLAAEVAFVAAVAALVLNLAHTHERRSMIVGILCVLFGTGMYAAPLSVMKMVIQTKSVEYMPLFLSLASLVNGICWTAYALIRFDLYITIPNGLGVMFAVAQLILYAIYYKSTQQIIEARKRKEADHVAMTDVVVDSAKNNPSSGAAAAAANGRY.

Residues M1–A10 lie on the Extracellular side of the membrane. Residues A10–S94 enclose the MtN3/slv 1 domain. The helical transmembrane segment at I11–I31 threads the bilayer. The Cytoplasmic segment spans residues R32–A44. Residues V45–V65 form a helical membrane-spanning segment. Topologically, residues H66–G77 are extracellular. N76 carries N-linked (GlcNAc...) asparagine glycosylation. Residues T78–V98 form a helical membrane-spanning segment. The Cytoplasmic segment spans residues R99–R101. A helical transmembrane segment spans residues V102–N122. At L123–S131 the chain is on the extracellular side. Residues M132–V152 traverse the membrane as a helical segment. Positions I133 to T217 constitute a MtN3/slv 2 domain. The Cytoplasmic portion of the chain corresponds to M153 to M165. Residues P166–I186 traverse the membrane as a helical segment. Residues R187–Y191 lie on the Extracellular side of the membrane. The helical transmembrane segment at I192–I212 threads the bilayer. Over Y213 to Y259 the chain is Cytoplasmic.

This sequence belongs to the SWEET sugar transporter family. In terms of assembly, forms homooligomers and/or heterooligomers.

Its subcellular location is the cell membrane. Mediates both low-affinity uptake and efflux of sugar across the plasma membrane. The protein is Bidirectional sugar transporter SWEET4 (SWEET4) of Oryza sativa subsp. indica (Rice).